We begin with the raw amino-acid sequence, 859 residues long: Low-density lipoprotein receptor-related protein 12 (859 aa).

An N-terminal signal peptide occupies residues Met1 to Ala32. Residues Glu33 to Arg492 lie on the Extracellular side of the membrane. Intrachain disulfides connect Cys47-Cys76 and Cys103-Cys122. A CUB 1 domain is found at Cys47–Gly159. An N-linked (GlcNAc...) asparagine glycan is attached at Asn75. A glycan (N-linked (GlcNAc...) asparagine) is linked at Asn146. LDL-receptor class A domains lie at Asn165–Ala201 and Pro214–Asp255. 7 cysteine pairs are disulfide-bonded: Cys166–Cys178, Cys173–Cys191, Cys185–Cys200, Cys215–Cys232, Cys222–Cys245, Cys239–Cys254, and Cys259–Cys285. A CUB 2 domain is found at Cys259–Asp372. 2 N-linked (GlcNAc...) asparagine glycosylation sites follow: Asn284 and Asn366. 3 LDL-receptor class A domains span residues Phe374 to Thr411, Met412 to Phe449, and Phe450 to Pro486. Cystine bridges form between Cys375–Cys388, Cys382–Cys401, Cys395–Cys410, Cys413–Cys426, Cys420–Cys439, Cys433–Cys448, Cys451–Cys463, Cys458–Cys476, and Cys470–Cys485. Asn409 is a glycosylation site (N-linked (GlcNAc...) asparagine). A glycan (N-linked (GlcNAc...) asparagine) is linked at Asn441. A helical membrane pass occupies residues Val493–Gly513. The Cytoplasmic segment spans residues Cys514–Cys859. 4 disordered regions span residues Ala623–Lys678, Ala693–Arg723, Ser748–Asp770, and Gln802–Asp823. 2 stretches are compositionally biased toward polar residues: residues Ser748 to Leu757 and Gln802 to Asn814.

The protein belongs to the LDLR family. As to quaternary structure, may interact with RACK1, ZFYVE9 and NMRK2.

It localises to the membrane. Its subcellular location is the coated pit. Functionally, probable receptor, which may be involved in the internalization of lipophilic molecules and/or signal transduction. May act as a tumor suppressor. This chain is Low-density lipoprotein receptor-related protein 12 (LRP12), found in Pongo abelii (Sumatran orangutan).